The primary structure comprises 139 residues: Large ribosomal subunit protein uL16 (139 aa).

Over residues methionine 1–arginine 17 the composition is skewed to basic residues. A disordered region spans residues methionine 1–glycine 24.

The protein belongs to the universal ribosomal protein uL16 family. In terms of assembly, part of the 50S ribosomal subunit.

Binds 23S rRNA and is also seen to make contacts with the A and possibly P site tRNAs. The protein is Large ribosomal subunit protein uL16 of Clavibacter michiganensis subsp. michiganensis (strain NCPPB 382).